Here is a 614-residue protein sequence, read N- to C-terminus: MECDAVIYNITENVQQVEEALWAVSALNEEISHFEKRKVFILLSTVMTWARSKPLDPDDNEVPFTEEDYRRRKHHPNFLDHINAEKIVLKFGKNAKKFATYVVASGLQYGAEGGILHTFFKMAWLGEVPALPVFGDGTNCIPAIHVVDLAGVIQNIIDHVPKLHYLVAVDEAVHTLEDLVKCISKNTGPGKIQKVPKENAFLTKDLTQEYLDHLLVNLRMEALFVKENFNIRWVAQTGFVENINSILKEYKQSRGLLPIKICILGPPAVGKSSISEELAKYYKLHHIKMKDVIAEAIAKLEAIVAPKDSVEGEEEGEEEEEEENVDDAQELLDGIKESMEQNAGRLEDQYIIRFVKEKLKSMPCRNQGFILDGFPKTYDQAKDLFNQEEEEEEEEIRGKIFPYDKLITPEFVCGLDASDEFLKERVMNLPESVVAGTHYSQDRFLRSLSHYRDINTDDETVFNYFDELEIHPIHIDVGKLEDAQNRLAIKQLIKEIGKPRNYGLTDEEKAEEEKKAAEERLAKEAAQTAELEHKEAMEMAEKIARWEEWNKRLEEVKREERELLEVQSVPLRNYLMTYVMPTLMQGLNECCKVRPEDPVDFLAEYLFKNNPEMQ.

Positions 258–503 are adenylate kinase; it reads PIKICILGPP…KEIGKPRNYG (246 aa). Position 268-273 (268-273) interacts with ATP; it reads AVGKSS. The NMP stretch occupies residues 288–346; the sequence is KMKDVIAEAIAKLEAIVAPKDSVEGEEEGEEEEEEENVDDAQELLDGIKESMEQNAGRL. The interval 308–327 is disordered; it reads DSVEGEEEGEEEEEEENVDD. Over residues 311-327 the composition is skewed to acidic residues; the sequence is EGEEEGEEEEEEENVDD. AMP-binding positions include 323-346, 373-376, and Gln-380; these read ENVD…AGRL and GFPK. A coiled-coil region spans residues 376–568; it reads KTYDQAKDLF…EERELLEVQS (193 aa). Residues 428–438 form an LID region; sequence NLPESVVAGTH. Residue Arg-446 participates in AMP binding. Position 478 (Gly-478) interacts with ATP. The tract at residues 570–614 is DPY-30; the sequence is PLRNYLMTYVMPTLMQGLNECCKVRPEDPVDFLAEYLFKNNPEMQ.

The protein in the central section; belongs to the adenylate kinase family. In the C-terminal section; belongs to the dpy-30 family.

It localises to the cytoplasm. The protein localises to the cytosol. It is found in the cell projection. Its subcellular location is the cilium. The protein resides in the flagellum. It catalyses the reaction AMP + ATP = 2 ADP. The enzyme catalyses a 2'-deoxyribonucleoside 5'-diphosphate + ATP = a 2'-deoxyribonucleoside 5'-triphosphate + ADP. The catalysed reaction is a ribonucleoside 5'-diphosphate + ATP = a ribonucleoside 5'-triphosphate + ADP. Its function is as follows. Nucleoside monophosphate (NMP) kinase that catalyzes the reversible transfer of the terminal phosphate group between nucleoside triphosphates and monophosphates. Has highest activity toward AMP, and weaker activity toward dAMP, CMP and dCMP. Also displays broad nucleoside diphosphate kinase activity. Involved in maintaining ciliary structure and function. This Mus musculus (Mouse) protein is Adenylate kinase 7 (Ak7).